The chain runs to 434 residues: uncharacterized protein (434 aa).

K216 is modified (N6-(pyridoxal phosphate)lysine).

This is an uncharacterized protein from Schizosaccharomyces pombe (strain 972 / ATCC 24843) (Fission yeast).